The primary structure comprises 519 residues: Aldehyde dehydrogenase, mitochondrial (519 aa).

A mitochondrion-targeting transit peptide spans 1–19; it reads MLRAALSTARRGPRLSRLL. An SIFI-degron motif is present at residues 12 to 26; the sequence is GPRLSRLLSAAATSA. An N6-acetyllysine mark is found at Lys-54, Lys-75, Lys-80, and Lys-161. Position 264–269 (264–269) interacts with NAD(+); that stretch reads GSTEVG. The active-site Proton acceptor is Glu-287. Cys-321 serves as the catalytic Nucleophile. An N6-acetyllysine mark is found at Lys-370, Lys-377, Lys-385, Lys-409, Lys-428, Lys-430, Lys-443, and Lys-453.

It belongs to the aldehyde dehydrogenase family. As to quaternary structure, homotetramer. In response to mitochondrial stress, the precursor protein is ubiquitinated by the SIFI complex in the cytoplasm before mitochondrial import, leading to its degradation. Within the SIFI complex, UBR4 initiates ubiquitin chain that are further elongated or branched by KCMF1.

The protein localises to the mitochondrion matrix. It catalyses the reaction an aldehyde + NAD(+) + H2O = a carboxylate + NADH + 2 H(+). The protein operates within alcohol metabolism; ethanol degradation; acetate from ethanol: step 2/2. Functionally, required for clearance of cellular formaldehyde, a cytotoxic and carcinogenic metabolite that induces DNA damage. In Rattus norvegicus (Rat), this protein is Aldehyde dehydrogenase, mitochondrial (Aldh2).